Reading from the N-terminus, the 98-residue chain is DNA-binding protein Fis (98 aa).

Positions 74–93 form a DNA-binding region, H-T-H motif; the sequence is QTRAALMLGINRSTLRKKLK.

This sequence belongs to the transcriptional regulatory Fis family. In terms of assembly, homodimer.

Its function is as follows. Activates ribosomal RNA transcription. Plays a direct role in upstream activation of rRNA promoters. The protein is DNA-binding protein Fis of Buchnera aphidicola subsp. Acyrthosiphon pisum (strain 5A).